A 313-amino-acid chain; its full sequence is Methionyl-tRNA formyltransferase (313 aa).

112-115 is a (6S)-5,6,7,8-tetrahydrofolate binding site; sequence SLLP.

Belongs to the Fmt family.

The catalysed reaction is L-methionyl-tRNA(fMet) + (6R)-10-formyltetrahydrofolate = N-formyl-L-methionyl-tRNA(fMet) + (6S)-5,6,7,8-tetrahydrofolate + H(+). Functionally, attaches a formyl group to the free amino group of methionyl-tRNA(fMet). The formyl group appears to play a dual role in the initiator identity of N-formylmethionyl-tRNA by promoting its recognition by IF2 and preventing the misappropriation of this tRNA by the elongation apparatus. This is Methionyl-tRNA formyltransferase from Geotalea uraniireducens (strain Rf4) (Geobacter uraniireducens).